The chain runs to 53 residues: uncharacterized protein (53 aa).

The protein localises to the mitochondrion matrix. The protein resides in the kinetoplast. This is an uncharacterized protein from Trypanosoma brucei brucei.